Here is a 484-residue protein sequence, read N- to C-terminus: Synaptic vesicle membrane protein VAT-1 homolog (484 aa).

2 stretches are compositionally biased toward low complexity: residues 1–13 (MSGE…QQNA) and 40–61 (SAST…PAAE). 2 disordered regions span residues 1–65 (MSGE…KAPE) and 402–484 (IGKI…KEEN). Residues 411-484 (PMKEEEKKEE…KKEEVKKEEN (74 aa)) show a composition bias toward basic and acidic residues.

It belongs to the zinc-containing alcohol dehydrogenase family. Quinone oxidoreductase subfamily.

The polypeptide is Synaptic vesicle membrane protein VAT-1 homolog (Danio rerio (Zebrafish)).